A 344-amino-acid polypeptide reads, in one-letter code: Phenylalanine--tRNA ligase alpha subunit (344 aa).

Glutamate 255 serves as a coordination point for Mg(2+).

It belongs to the class-II aminoacyl-tRNA synthetase family. Phe-tRNA synthetase alpha subunit type 1 subfamily. Tetramer of two alpha and two beta subunits. It depends on Mg(2+) as a cofactor.

The protein localises to the cytoplasm. The catalysed reaction is tRNA(Phe) + L-phenylalanine + ATP = L-phenylalanyl-tRNA(Phe) + AMP + diphosphate + H(+). The sequence is that of Phenylalanine--tRNA ligase alpha subunit from Persephonella marina (strain DSM 14350 / EX-H1).